The chain runs to 349 residues: Sexual stage-specific protein G37 (349 aa).

A signal peptide spans 1–18 (MKLYLVTFLFFVIYKNKT). Over 19 to 91 (FVDCVTKKQD…INQVSNNIMR (73 aa)) the chain is Extracellular. A helical transmembrane segment spans residues 92–112 (VYISLLSLFLFPYFSYIGIFG). Topologically, residues 113-117 (HSRNK) are cytoplasmic. The chain crosses the membrane as a helical span at residues 118–138 (ANLTLSSLLAYFALLVSFFLF). Over 139 to 140 (NG) the chain is Extracellular. The chain crosses the membrane as a helical span at residues 141–161 (ILNIGFVTSLPLVVAVLIFIL). Residues 162–176 (GVSDCEINFLYKYTR) are Cytoplasmic-facing. The chain crosses the membrane as a helical span at residues 177-197 (YIFCFIISKLIYDVVTYISKD). The Extracellular portion of the chain corresponds to 198–218 (GANIFDYGFSGHIYMNLLRGK). The chain crosses the membrane as a helical span at residues 219 to 239 (YYIVLKLIHLIILSLISLIII). Over 240 to 262 (KICPKIFSNNHLKSPISITFDKY) the chain is Cytoplasmic. Residues 263–283 (IISFLCSLPIATAISQVFYLL) form a helical membrane-spanning segment. The Extracellular segment spans residues 284–305 (SKTINPIDPSIFFMIPSSINFS). The helical transmembrane segment at 306–326 (STGTIFSLSIWILMSYLMTFL) threads the bilayer. Residues 327–349 (RNKVEADFNNILNKIPNNLPDFI) are Cytoplasmic-facing.

It localises to the cell membrane. In terms of biological role, involved in the development of male gametocytes. The protein is Sexual stage-specific protein G37 of Plasmodium berghei (strain Anka).